The sequence spans 372 residues: Glutamate 5-kinase (372 aa).

Residue Lys14 participates in ATP binding. Ser54, Asp141, and Asn153 together coordinate substrate. 173–174 (TD) contributes to the ATP binding site. Residues 280-358 (RGTLVLDAGA…DAIEKLLGYV (79 aa)) enclose the PUA domain.

The protein belongs to the glutamate 5-kinase family.

It localises to the cytoplasm. The catalysed reaction is L-glutamate + ATP = L-glutamyl 5-phosphate + ADP. The protein operates within amino-acid biosynthesis; L-proline biosynthesis; L-glutamate 5-semialdehyde from L-glutamate: step 1/2. In terms of biological role, catalyzes the transfer of a phosphate group to glutamate to form L-glutamate 5-phosphate. This chain is Glutamate 5-kinase, found in Ectopseudomonas mendocina (strain ymp) (Pseudomonas mendocina).